Here is a 296-residue protein sequence, read N- to C-terminus: Ribosomal RNA small subunit methyltransferase H (296 aa).

S-adenosyl-L-methionine is bound by residues 41-43 (GGH), Asp60, Phe87, Asp103, and Gln110.

Belongs to the methyltransferase superfamily. RsmH family.

It localises to the cytoplasm. It carries out the reaction cytidine(1402) in 16S rRNA + S-adenosyl-L-methionine = N(4)-methylcytidine(1402) in 16S rRNA + S-adenosyl-L-homocysteine + H(+). Specifically methylates the N4 position of cytidine in position 1402 (C1402) of 16S rRNA. The sequence is that of Ribosomal RNA small subunit methyltransferase H from Synechococcus elongatus (strain ATCC 33912 / PCC 7942 / FACHB-805) (Anacystis nidulans R2).